Consider the following 100-residue polypeptide: Large ribosomal subunit protein eL36A (100 aa).

The residue at position 2 (Thr2) is an N-acetylthreonine.

It belongs to the eukaryotic ribosomal protein eL36 family. As to quaternary structure, component of the large ribosomal subunit (LSU). Mature yeast ribosomes consist of a small (40S) and a large (60S) subunit. The 40S small subunit contains 1 molecule of ribosomal RNA (18S rRNA) and 33 different proteins (encoded by 57 genes). The large 60S subunit contains 3 rRNA molecules (25S, 5.8S and 5S rRNA) and 46 different proteins (encoded by 81 genes). Post-translationally, N-terminally acetylated by acetyltransferase NatA.

Its subcellular location is the cytoplasm. Component of the ribosome, a large ribonucleoprotein complex responsible for the synthesis of proteins in the cell. The small ribosomal subunit (SSU) binds messenger RNAs (mRNAs) and translates the encoded message by selecting cognate aminoacyl-transfer RNA (tRNA) molecules. The large subunit (LSU) contains the ribosomal catalytic site termed the peptidyl transferase center (PTC), which catalyzes the formation of peptide bonds, thereby polymerizing the amino acids delivered by tRNAs into a polypeptide chain. The nascent polypeptides leave the ribosome through a tunnel in the LSU and interact with protein factors that function in enzymatic processing, targeting, and the membrane insertion of nascent chains at the exit of the ribosomal tunnel. This chain is Large ribosomal subunit protein eL36A, found in Saccharomyces cerevisiae (strain ATCC 204508 / S288c) (Baker's yeast).